The chain runs to 376 residues: Glutamate 5-kinase (376 aa).

Lys15 contributes to the ATP binding site. Substrate is bound by residues Ser55, Asp141, and Asn153. Residues 173–174 (SD) and 215–221 (TGGMQTK) each bind ATP. The region spanning 280–361 (AGRLTVDAGA…HAIAEVLDEA (82 aa)) is the PUA domain.

Belongs to the glutamate 5-kinase family.

The protein resides in the cytoplasm. The enzyme catalyses L-glutamate + ATP = L-glutamyl 5-phosphate + ADP. The protein operates within amino-acid biosynthesis; L-proline biosynthesis; L-glutamate 5-semialdehyde from L-glutamate: step 1/2. Functionally, catalyzes the transfer of a phosphate group to glutamate to form L-glutamate 5-phosphate. This is Glutamate 5-kinase from Salinibacter ruber (strain DSM 13855 / M31).